Consider the following 367-residue polypeptide: Chorismate synthase (367 aa).

Residues 41 to 60 are disordered; the sequence is FTHDLQRRASGKSRHTSARR. Residues Arg48 and Arg54 each contribute to the NADP(+) site. Residues 125–127, 238–239, Gly278, 293–297, and Arg319 contribute to the FMN site; these read RSS, NA, and KPTSS.

Belongs to the chorismate synthase family. Homotetramer. FMNH2 serves as cofactor.

The enzyme catalyses 5-O-(1-carboxyvinyl)-3-phosphoshikimate = chorismate + phosphate. The protein operates within metabolic intermediate biosynthesis; chorismate biosynthesis; chorismate from D-erythrose 4-phosphate and phosphoenolpyruvate: step 7/7. Functionally, catalyzes the anti-1,4-elimination of the C-3 phosphate and the C-6 proR hydrogen from 5-enolpyruvylshikimate-3-phosphate (EPSP) to yield chorismate, which is the branch point compound that serves as the starting substrate for the three terminal pathways of aromatic amino acid biosynthesis. This reaction introduces a second double bond into the aromatic ring system. The protein is Chorismate synthase of Xanthomonas euvesicatoria pv. vesicatoria (strain 85-10) (Xanthomonas campestris pv. vesicatoria).